The sequence spans 115 residues: Delta-hexatoxin-Hi1a (115 aa).

Positions 1-18 (MKVIATLYGLLFLTVVLG) are cleaved as a signal peptide. A propeptide spanning residues 19–73 (DITEGNENDLVENFREELSEADIPLLKKLEAIEDALLEKDFLPYEEEDRNARPKR) is cleaved from the precursor. 4 cysteine pairs are disulfide-bonded: cysteine 74–cysteine 88, cysteine 81–cysteine 93, cysteine 87–cysteine 104, and cysteine 89–cysteine 115.

It belongs to the neurotoxin 06 (delta-actx) family. In terms of tissue distribution, expressed by the venom gland.

It is found in the secreted. Neurotoxin that slows inactivation of voltage-gated sodium channels (Nav). In vivo, is lethal to both vertebrates and insects. The polypeptide is Delta-hexatoxin-Hi1a (Hadronyche infensa (Fraser island funnel-web spider)).